The chain runs to 417 residues: Serine hydroxymethyltransferase (417 aa).

(6S)-5,6,7,8-tetrahydrofolate contacts are provided by residues L121 and G125–L127. K229 is modified (N6-(pyridoxal phosphate)lysine). S355–F357 serves as a coordination point for (6S)-5,6,7,8-tetrahydrofolate.

This sequence belongs to the SHMT family. As to quaternary structure, homodimer. It depends on pyridoxal 5'-phosphate as a cofactor.

Its subcellular location is the cytoplasm. It catalyses the reaction (6R)-5,10-methylene-5,6,7,8-tetrahydrofolate + glycine + H2O = (6S)-5,6,7,8-tetrahydrofolate + L-serine. The protein operates within one-carbon metabolism; tetrahydrofolate interconversion. Its pathway is amino-acid biosynthesis; glycine biosynthesis; glycine from L-serine: step 1/1. Catalyzes the reversible interconversion of serine and glycine with tetrahydrofolate (THF) serving as the one-carbon carrier. This reaction serves as the major source of one-carbon groups required for the biosynthesis of purines, thymidylate, methionine, and other important biomolecules. Also exhibits THF-independent aldolase activity toward beta-hydroxyamino acids, producing glycine and aldehydes, via a retro-aldol mechanism. This Serratia proteamaculans (strain 568) protein is Serine hydroxymethyltransferase.